The sequence spans 261 residues: Thiazole synthase (261 aa).

The active-site Schiff-base intermediate with DXP is Lys-95. 1-deoxy-D-xylulose 5-phosphate is bound by residues Gly-156, 182-183 (AG), and 204-205 (NT).

Belongs to the ThiG family. In terms of assembly, homotetramer. Forms heterodimers with either ThiH or ThiS.

The protein resides in the cytoplasm. The catalysed reaction is [ThiS sulfur-carrier protein]-C-terminal-Gly-aminoethanethioate + 2-iminoacetate + 1-deoxy-D-xylulose 5-phosphate = [ThiS sulfur-carrier protein]-C-terminal Gly-Gly + 2-[(2R,5Z)-2-carboxy-4-methylthiazol-5(2H)-ylidene]ethyl phosphate + 2 H2O + H(+). The protein operates within cofactor biosynthesis; thiamine diphosphate biosynthesis. Catalyzes the rearrangement of 1-deoxy-D-xylulose 5-phosphate (DXP) to produce the thiazole phosphate moiety of thiamine. Sulfur is provided by the thiocarboxylate moiety of the carrier protein ThiS. In vitro, sulfur can be provided by H(2)S. In Pectobacterium carotovorum subsp. carotovorum (strain PC1), this protein is Thiazole synthase.